The primary structure comprises 510 residues: GMP synthase [glutamine-hydrolyzing] (510 aa).

The Glutamine amidotransferase type-1 domain maps to 5-195 (KILVLDFGGQ…LFKVCGVKGT (191 aa)). Residue Cys82 is the Nucleophile of the active site. Catalysis depends on residues His169 and Glu171. Residues 196–385 (WNMADFINEE…LGLPDEIVWR (190 aa)) form the GMPS ATP-PPase domain. 223 to 229 (SGGVDSA) lines the ATP pocket.

Homodimer.

The catalysed reaction is XMP + L-glutamine + ATP + H2O = GMP + L-glutamate + AMP + diphosphate + 2 H(+). It participates in purine metabolism; GMP biosynthesis; GMP from XMP (L-Gln route): step 1/1. Its function is as follows. Catalyzes the synthesis of GMP from XMP. The sequence is that of GMP synthase [glutamine-hydrolyzing] from Halothermothrix orenii (strain H 168 / OCM 544 / DSM 9562).